Consider the following 454-residue polypeptide: Bifunctional protein GlmU (454 aa).

A pyrophosphorylase region spans residues 1–226; the sequence is MSLEIVILAA…AMEVQGVNDR (226 aa). UDP-N-acetyl-alpha-D-glucosamine is bound by residues 8 to 11, Lys-22, Gln-73, 78 to 79, 99 to 101, Gly-136, Glu-151, Asn-166, and Asn-224; these read LAAG, GT, and YGD. Asp-101 serves as a coordination point for Mg(2+). Position 224 (Asn-224) interacts with Mg(2+). A linker region spans residues 227–247; the sequence is MQQAQLERHYQRLRAEELMRQ. Positions 248 to 454 are N-acetyltransferase; it reads GVTLLDPQRL…NWKRPEKIKK (207 aa). UDP-N-acetyl-alpha-D-glucosamine contacts are provided by Arg-330 and Lys-348. His-360 functions as the Proton acceptor in the catalytic mechanism. UDP-N-acetyl-alpha-D-glucosamine-binding residues include Tyr-363 and Asn-374. Acetyl-CoA-binding positions include Ala-377, 383–384, Ser-402, Ala-420, and Arg-437; that span reads NY.

It in the N-terminal section; belongs to the N-acetylglucosamine-1-phosphate uridyltransferase family. In the C-terminal section; belongs to the transferase hexapeptide repeat family. As to quaternary structure, homotrimer. The cofactor is Mg(2+).

It is found in the cytoplasm. It carries out the reaction alpha-D-glucosamine 1-phosphate + acetyl-CoA = N-acetyl-alpha-D-glucosamine 1-phosphate + CoA + H(+). It catalyses the reaction N-acetyl-alpha-D-glucosamine 1-phosphate + UTP + H(+) = UDP-N-acetyl-alpha-D-glucosamine + diphosphate. The protein operates within nucleotide-sugar biosynthesis; UDP-N-acetyl-alpha-D-glucosamine biosynthesis; N-acetyl-alpha-D-glucosamine 1-phosphate from alpha-D-glucosamine 6-phosphate (route II): step 2/2. Its pathway is nucleotide-sugar biosynthesis; UDP-N-acetyl-alpha-D-glucosamine biosynthesis; UDP-N-acetyl-alpha-D-glucosamine from N-acetyl-alpha-D-glucosamine 1-phosphate: step 1/1. It participates in bacterial outer membrane biogenesis; LPS lipid A biosynthesis. Catalyzes the last two sequential reactions in the de novo biosynthetic pathway for UDP-N-acetylglucosamine (UDP-GlcNAc). The C-terminal domain catalyzes the transfer of acetyl group from acetyl coenzyme A to glucosamine-1-phosphate (GlcN-1-P) to produce N-acetylglucosamine-1-phosphate (GlcNAc-1-P), which is converted into UDP-GlcNAc by the transfer of uridine 5-monophosphate (from uridine 5-triphosphate), a reaction catalyzed by the N-terminal domain. The protein is Bifunctional protein GlmU of Pseudomonas aeruginosa (strain ATCC 15692 / DSM 22644 / CIP 104116 / JCM 14847 / LMG 12228 / 1C / PRS 101 / PAO1).